The sequence spans 206 residues: Enterobactin synthase component D (206 aa).

Residues aspartate 107, glutamate 109, and glutamate 152 each coordinate Mg(2+).

It belongs to the P-Pant transferase superfamily. EntD family. As to quaternary structure, entB, EntD, EntE, and EntF form a multienzyme complex called enterobactin synthase. Mg(2+) serves as cofactor.

Its subcellular location is the membrane. The catalysed reaction is apo-[aryl-carrier protein] + CoA = holo-[aryl-carrier protein] + adenosine 3',5'-bisphosphate + H(+). It carries out the reaction apo-[peptidyl-carrier protein] + CoA = holo-[peptidyl-carrier protein] + adenosine 3',5'-bisphosphate + H(+). Its pathway is siderophore biosynthesis; enterobactin biosynthesis. Its function is as follows. Involved in the biosynthesis of the siderophore enterobactin (enterochelin), which is a macrocyclic trimeric lactone of N-(2,3-dihydroxybenzoyl)-serine. The serine trilactone serves as a scaffolding for the three catechol functionalities that provide hexadentate coordination for the tightly ligated iron(2+) atoms. Plays an essential role in the assembly of the enterobactin by catalyzing the transfer of the 4'-phosphopantetheine (Ppant) moiety from coenzyme A to the apo-domains of both EntB (ArCP domain) and EntF (PCP domain) to yield their holo-forms which make them competent for the activation of 2,3-dihydroxybenzoate (DHB) and L-serine, respectively. This Escherichia coli (strain K12) protein is Enterobactin synthase component D.